A 275-amino-acid polypeptide reads, in one-letter code: Sororin-B (275 aa).

Over residues 1 to 16 (MSERKKRGSSDADSRR) the composition is skewed to basic and acidic residues. Disordered stretches follow at residues 1 to 42 (MSER…PAPI) and 63 to 117 (NTGS…EIDV). 2 stretches are compositionally biased toward polar residues: residues 63–76 (NTGS…SNVT) and 93–112 (NAFS…QSSA). A KEN box motif is present at residues 91 to 93 (KEN). The FGF motif motif lies at 186–188 (FGF). Residues 253-275 (VDEWAAIMNAEFDEAEKFDLTVE) form a C-terminal Sororin domain region.

It belongs to the sororin family. In terms of assembly, interacts with the APC/C complex. Interacts with the chromatin-bound cohesin complex; the interaction is indirect, occurs after DNA replication and requires acetylation of the cohesin component smc3. Interacts (via the FGF motif) with pds5a and pds5b; the interaction is direct and prevents the interaction of pds5a with wapl. Ubiquitinated by the APC/C complex in G1, leading to its degradation.

Its subcellular location is the nucleus. The protein resides in the chromosome. It is found in the cytoplasm. Regulator of sister chromatid cohesion in mitosis stabilizing cohesin complex association with chromatin. May antagonize the action of wapl which stimulates cohesin dissociation from chromatin. Cohesion ensures that chromosome partitioning is accurate in both meiotic and mitotic cells and plays an important role in DNA repair. Required for efficient DNA double-stranded break repair. The chain is Sororin-B (cdca5-b) from Xenopus laevis (African clawed frog).